The primary structure comprises 121 residues: uncharacterized protein (121 aa).

The interval 101-121 (SIEPTATGSPETRDPDPSAYA) is disordered. The span at 111-121 (ETRDPDPSAYA) shows a compositional bias: basic and acidic residues.

It is found in the mitochondrion. This is an uncharacterized protein from Arabidopsis thaliana (Mouse-ear cress).